Reading from the N-terminus, the 297-residue chain is Myozenin-1 (297 aa).

Residues 1–34 are disordered; the sequence is MPLSGTPAPNKKRKSSKLIMELTGGGQESSGLNL. Residue Ser82 is modified to Phosphoserine. The tract at residues 105-172 is disordered; that stretch reads FSYSKSSGGG…ALPDNQAGGE (68 aa). The span at 118–128 shows a compositional bias: low complexity; the sequence is RSGSAGQYGSD. Gly residues predominate over residues 136-162; the sequence is SGSGSGSGSGPGSGGAGGPGGHSGRGG.

Belongs to the myozenin family. Interacts with ACTN2, ACTN3, FLNA, FLNB, FLNC, LDB3, PPP3CA and TCAP. Interacts via its C-terminal region with MYOT.

Its subcellular location is the nucleus. It localises to the cell projection. The protein resides in the pseudopodium. Myozenins may serve as intracellular binding proteins involved in linking Z-disk proteins such as alpha-actinin, gamma-filamin, TCAP/telethonin, LDB3/ZASP and localizing calcineurin signaling to the sarcomere. Plays an important role in the modulation of calcineurin signaling. May play a role in myofibrillogenesis. The chain is Myozenin-1 (MYOZ1) from Bos taurus (Bovine).